Consider the following 252-residue polypeptide: Phosphoglycolate phosphatase (252 aa).

The Nucleophile role is filled by D13. Mg(2+) contacts are provided by D13, D15, and D192.

It belongs to the HAD-like hydrolase superfamily. CbbY/CbbZ/Gph/YieH family. In terms of assembly, monomer. Mg(2+) serves as cofactor. It depends on chloride as a cofactor.

It catalyses the reaction 2-phosphoglycolate + H2O = glycolate + phosphate. It functions in the pathway organic acid metabolism; glycolate biosynthesis; glycolate from 2-phosphoglycolate: step 1/1. Specifically catalyzes the dephosphorylation of 2-phosphoglycolate. Is involved in the dissimilation of the intracellular 2-phosphoglycolate formed during the DNA repair of 3'-phosphoglycolate ends, a major class of DNA lesions induced by oxidative stress. This is Phosphoglycolate phosphatase from Salmonella choleraesuis (strain SC-B67).